A 546-amino-acid chain; its full sequence is Zinc finger and BTB domain-containing protein 7A (546 aa).

Residues 34–101 (CDVVILVEGQ…AYTATLTVST (68 aa)) form the BTB domain. The segment at 189 to 288 (QEDEEEPDCN…SFVPTGAEAE (100 aa)) is disordered. C2H2-type zinc fingers lie at residues 359 to 381 (QKCP…IRTH), 387 to 409 (YECN…MRKH), and 415 to 437 (YLCQ…MRVH). The segment at 443 to 467 (YQCDSCFKTFVRSDHLHRHLKKDGC) adopts a C2H2-type 4; atypical zinc-finger fold. Residues 463 to 546 (KKDGCNGIPS…AAEGSAPGPS (84 aa)) form a disordered region. Residues 534-546 (AGGAAEGSAPGPS) show a composition bias toward low complexity.

It localises to the nucleus. Its function is as follows. Transcription factor that represses the transcription of a wide range of genes involved in cell proliferation and differentiation. Directly and specifically binds to the consensus sequence 5'-[GA][CA]GACCCCCCCCC-3' and represses transcription both by regulating the organization of chromatin and through the direct recruitment of transcription factors to gene regulatory regions. May also play a role, independently of its transcriptional activity, in double-strand break repair via classical non-homologous end joining/cNHEJ and in alternative splicing. This chain is Zinc finger and BTB domain-containing protein 7A, found in Gallus gallus (Chicken).